The following is an 860-amino-acid chain: Protein translocase subunit SecA (860 aa).

ATP is bound by residues Q87, 105–109, and D514; that span reads GEGKT. Zn(2+) is bound by residues C846, C848, C857, and C858.

Belongs to the SecA family. In terms of assembly, monomer and homodimer. Part of the essential Sec protein translocation apparatus which comprises SecA, SecYEG and auxiliary proteins SecDF. Other proteins may also be involved. Zn(2+) is required as a cofactor.

It localises to the cell membrane. The protein resides in the cytoplasm. The catalysed reaction is ATP + H2O + cellular proteinSide 1 = ADP + phosphate + cellular proteinSide 2.. In terms of biological role, part of the Sec protein translocase complex. Interacts with the SecYEG preprotein conducting channel. Has a central role in coupling the hydrolysis of ATP to the transfer of proteins into and across the cell membrane, serving as an ATP-driven molecular motor driving the stepwise translocation of polypeptide chains across the membrane. The polypeptide is Protein translocase subunit SecA (Endomicrobium trichonymphae).